A 458-amino-acid chain; its full sequence is A-type ATP synthase subunit B (458 aa).

It belongs to the ATPase alpha/beta chains family. In terms of assembly, has multiple subunits with at least A(3), B(3), C, D, E, F, H, I and proteolipid K(x).

Its subcellular location is the cell membrane. Its function is as follows. Component of the A-type ATP synthase that produces ATP from ADP in the presence of a proton gradient across the membrane. The B chain is a regulatory subunit. The sequence is that of A-type ATP synthase subunit B from Methanocorpusculum labreanum (strain ATCC 43576 / DSM 4855 / Z).